A 216-amino-acid polypeptide reads, in one-letter code: Serine/threonine-protein phosphatase 1 (216 aa).

The Mn(2+) site is built by D24, H26, D53, and N79. The active-site Proton donor is H80. H185 is a binding site for Mn(2+).

It belongs to the PPP phosphatase family. PP-1 subfamily. Requires Mn(2+) as cofactor.

The catalysed reaction is O-phospho-L-seryl-[protein] + H2O = L-seryl-[protein] + phosphate. The enzyme catalyses O-phospho-L-threonyl-[protein] + H2O = L-threonyl-[protein] + phosphate. Inhibited by cadmium, copper, zinc when added cobalt when added concomitantly with manganese. Can hydrolyze phosphorylated Ser-, Thr- or Tyr-substrates in vitro. The natural substrate is unknown. The sequence is that of Serine/threonine-protein phosphatase 1 (pphA) from Salmonella typhimurium (strain LT2 / SGSC1412 / ATCC 700720).